A 291-amino-acid chain; its full sequence is B3 domain-containing protein At2g16210 (291 aa).

The segment at residues 19-114 is a DNA-binding region (TF-B3 1); that stretch reads FFKVVQSINV…HFTVNIFKLD (96 aa). Over residues 149-159 the composition is skewed to polar residues; sequence VSSNRGQTTAA. The segment at 149-182 is disordered; sequence VSSNRGQTTAAESKGRKLNLGKRAAKESQSSKRT. The span at 172–182 shows a compositional bias: basic and acidic residues; it reads AAKESQSSKRT. The TF-B3 2 DNA-binding region spans 200–291; it reads AAAFTILFKQ…KELLLVVSKP (92 aa).

Its subcellular location is the nucleus. The protein is B3 domain-containing protein At2g16210 of Arabidopsis thaliana (Mouse-ear cress).